A 300-amino-acid chain; its full sequence is Cholesterol 25-hydroxylase-like protein (300 aa).

N9 carries N-linked (GlcNAc...) asparagine glycosylation. 3 consecutive transmembrane segments (helical) span residues L43–I63, L95–V115, and M130–N152. One can recognise a Fatty acid hydroxylase domain in the interval A135–G266. A Histidine box-1 motif is present at residues F148 to N152. The Histidine box-2 motif lies at H163–H167. Residues L180 to P200 traverse the membrane as a helical segment. The Histidine box-3 motif lies at A242–L248.

Belongs to the sterol desaturase family. Requires Fe cation as cofactor.

The protein resides in the membrane. Its function is as follows. Probable sterol desaturase. The protein is Cholesterol 25-hydroxylase-like protein of Caenorhabditis briggsae.